A 242-amino-acid chain; its full sequence is Biosynthetic peptidoglycan transglycosylase (242 aa).

A helical membrane pass occupies residues 19 to 39; sequence ILAALAVFWGGGIALFSVVPV.

The protein belongs to the glycosyltransferase 51 family.

It is found in the cell inner membrane. The catalysed reaction is [GlcNAc-(1-&gt;4)-Mur2Ac(oyl-L-Ala-gamma-D-Glu-L-Lys-D-Ala-D-Ala)](n)-di-trans,octa-cis-undecaprenyl diphosphate + beta-D-GlcNAc-(1-&gt;4)-Mur2Ac(oyl-L-Ala-gamma-D-Glu-L-Lys-D-Ala-D-Ala)-di-trans,octa-cis-undecaprenyl diphosphate = [GlcNAc-(1-&gt;4)-Mur2Ac(oyl-L-Ala-gamma-D-Glu-L-Lys-D-Ala-D-Ala)](n+1)-di-trans,octa-cis-undecaprenyl diphosphate + di-trans,octa-cis-undecaprenyl diphosphate + H(+). The protein operates within cell wall biogenesis; peptidoglycan biosynthesis. Functionally, peptidoglycan polymerase that catalyzes glycan chain elongation from lipid-linked precursors. The protein is Biosynthetic peptidoglycan transglycosylase of Salmonella agona (strain SL483).